Consider the following 595-residue polypeptide: Apolipoprotein N-acyltransferase 2 (595 aa).

5 helical membrane-spanning segments follow: residues 30–50, 63–83, 95–115, 167–187, and 210–230; these read FLAF…FGFF, LFFH…HWII, VVAI…FPIF, AEIT…YTLF, and FITL…FLFK. Residues 241-555 form the CN hydrolase domain; sequence LNVLIVQPDA…AEALSETIDV (315 aa). The Proton acceptor role is filled by Glu293. The active site involves Lys372. Catalysis depends on Cys463, which acts as the Nucleophile. A helical transmembrane segment spans residues 569 to 589; sequence LIPWLMLFLTGIYYLNLLIGI.

It belongs to the CN hydrolase family. Apolipoprotein N-acyltransferase subfamily.

The protein localises to the cell inner membrane. The catalysed reaction is N-terminal S-1,2-diacyl-sn-glyceryl-L-cysteinyl-[lipoprotein] + a glycerophospholipid = N-acyl-S-1,2-diacyl-sn-glyceryl-L-cysteinyl-[lipoprotein] + a 2-acyl-sn-glycero-3-phospholipid + H(+). It functions in the pathway protein modification; lipoprotein biosynthesis (N-acyl transfer). Functionally, catalyzes the phospholipid dependent N-acylation of the N-terminal cysteine of apolipoprotein, the last step in lipoprotein maturation. In Leptospira interrogans serogroup Icterohaemorrhagiae serovar copenhageni (strain Fiocruz L1-130), this protein is Apolipoprotein N-acyltransferase 2.